The chain runs to 296 residues: Acetyl-coenzyme A carboxylase carboxyl transferase subunit beta (296 aa).

The region spanning 26–295 (VWTKCTNCEQ…PFKVGELIIE (270 aa)) is the CoA carboxyltransferase N-terminal domain. 4 residues coordinate Zn(2+): cysteine 30, cysteine 33, cysteine 49, and cysteine 52. Residues 30-52 (CTNCEQVLYSEELKRNMQVCPKC) form a C4-type zinc finger.

It belongs to the AccD/PCCB family. Acetyl-CoA carboxylase is a heterohexamer composed of biotin carboxyl carrier protein (AccB), biotin carboxylase (AccC) and two subunits each of ACCase subunit alpha (AccA) and ACCase subunit beta (AccD). It depends on Zn(2+) as a cofactor.

It localises to the cytoplasm. It catalyses the reaction N(6)-carboxybiotinyl-L-lysyl-[protein] + acetyl-CoA = N(6)-biotinyl-L-lysyl-[protein] + malonyl-CoA. It participates in lipid metabolism; malonyl-CoA biosynthesis; malonyl-CoA from acetyl-CoA: step 1/1. In terms of biological role, component of the acetyl coenzyme A carboxylase (ACC) complex. Biotin carboxylase (BC) catalyzes the carboxylation of biotin on its carrier protein (BCCP) and then the CO(2) group is transferred by the transcarboxylase to acetyl-CoA to form malonyl-CoA. The polypeptide is Acetyl-coenzyme A carboxylase carboxyl transferase subunit beta (Haemophilus ducreyi (strain 35000HP / ATCC 700724)).